The chain runs to 566 residues: Protein kintoun (566 aa).

3 disordered regions span residues 183–298 (KYKG…TAPQ), 399–467 (EEEE…AETG), and 493–552 (QLEE…ESRI). Low complexity predominate over residues 208–290 (PQQTTGPQQP…HQPTDPQQTT (83 aa)). The span at 399–424 (EEEERRAEEEESRKGGDEDGELHPDC) shows a compositional bias: basic and acidic residues. The segment covering 440 to 467 (TPAADTHTPAADTHTPAADTHTPAAETG) has biased composition (low complexity). The segment covering 535-550 (DPAHTDPAHTDPEMES) has biased composition (basic and acidic residues).

It belongs to the PIH1 family. Kintoun subfamily.

It localises to the cytoplasm. It is found in the dynein axonemal particle. Required for cytoplasmic pre-assembly of axonemal dyneins, thereby playing a central role in motility in cilia and flagella. Involved in pre-assembly of dynein arm complexes in the cytoplasm before intraflagellar transport loads them for the ciliary compartment. This chain is Protein kintoun, found in Danio rerio (Zebrafish).